An 83-amino-acid polypeptide reads, in one-letter code: Normal mucosa of esophagus-specific gene 1 protein (83 aa).

It belongs to the complex I NDUFA4 subunit family.

Its subcellular location is the nucleus. In Rattus norvegicus (Rat), this protein is Normal mucosa of esophagus-specific gene 1 protein (Nmes1).